A 310-amino-acid chain; its full sequence is Methionyl-tRNA formyltransferase (310 aa).

(6S)-5,6,7,8-tetrahydrofolate is bound at residue 111-114 (SLLP).

The protein belongs to the Fmt family.

It catalyses the reaction L-methionyl-tRNA(fMet) + (6R)-10-formyltetrahydrofolate = N-formyl-L-methionyl-tRNA(fMet) + (6S)-5,6,7,8-tetrahydrofolate + H(+). In terms of biological role, attaches a formyl group to the free amino group of methionyl-tRNA(fMet). The formyl group appears to play a dual role in the initiator identity of N-formylmethionyl-tRNA by promoting its recognition by IF2 and preventing the misappropriation of this tRNA by the elongation apparatus. This Afipia carboxidovorans (strain ATCC 49405 / DSM 1227 / KCTC 32145 / OM5) (Oligotropha carboxidovorans) protein is Methionyl-tRNA formyltransferase.